A 64-amino-acid chain; its full sequence is Defensin-like protein 41 (64 aa).

Residues 1-21 (MTQGKRKHPCDLKNPSKRAPP) form a disordered region. Intrachain disulfides connect Cys10–Cys61, Cys24–Cys47, Cys33–Cys56, and Cys37–Cys58.

Belongs to the DEFL family.

This is Defensin-like protein 41 from Arabidopsis thaliana (Mouse-ear cress).